The following is a 368-amino-acid chain: Probable leucine aminopeptidase ARB_03492 (368 aa).

The first 18 residues, 1-18, serve as a signal peptide directing secretion; the sequence is MKVSAIAAVAALAAVAVA. N92 carries an N-linked (GlcNAc...) asparagine glycan. Residues H172 and D191 each contribute to the Zn(2+) site. 2 N-linked (GlcNAc...) asparagine glycosylation sites follow: N192 and N216. E230 and D257 together coordinate Zn(2+). The cysteines at positions 301 and 305 are disulfide-linked. A Zn(2+)-binding site is contributed by H334.

This sequence belongs to the peptidase M28 family. M28E subfamily. Monomer. It depends on Zn(2+) as a cofactor.

The protein localises to the secreted. Probable extracellular aminopeptidase which contributes to pathogenicity. The polypeptide is Probable leucine aminopeptidase ARB_03492 (Arthroderma benhamiae (strain ATCC MYA-4681 / CBS 112371) (Trichophyton mentagrophytes)).